A 617-amino-acid chain; its full sequence is Protein fem-1 homolog C (617 aa).

Residue methionine 1 is modified to N-acetylmethionine. 7 ANK repeats span residues 2–31, 40–70, 82–111, 115–144, 148–177, 181–210, and 213–242; these read DLKT…KEEV, NGAT…SIEV, EGAP…SVNN, TNST…DLEV, HGHT…DVNR, KGNT…KMEK, and YGMT…TSKT. 2 TPR repeats span residues 245–279 and 338–371; these read INAL…RYSD and SYYI…QQSN. ANK repeat units follow at residues 481–523 and 527–556; these read NNFS…DVNV and DDNS…HFDA.

The protein belongs to the fem-1 family. As to quaternary structure, component of a Cul2-RING (CRL2) E3 ubiquitin-protein ligase complex, also named ECS (Elongin BC-CUL2/5-SOCS-box protein) complex, composed of CUL2, Elongin BC (ELOB and ELOC), RBX1 and substrate-specific adapter FEM1C. As to expression, widely expressed. Highly expressed in kidney, cardiac tissue, skeletal muscle and testis. Expressed at lower levels in other tissues, including cartilage.

It functions in the pathway protein modification; protein ubiquitination. Substrate-recognition component of a Cul2-RING (CRL2) E3 ubiquitin-protein ligase complex of the DesCEND (destruction via C-end degrons) pathway, which recognizes a C-degron located at the extreme C terminus of target proteins, leading to their ubiquitination and degradation. The C-degron recognized by the DesCEND pathway is usually a motif of less than ten residues and can be present in full-length proteins, truncated proteins or proteolytically cleaved forms. The CRL2(FEM1C) complex specifically recognizes proteins with an arginine at the C-terminus: recognizes and binds proteins ending with -Lys/Arg-Xaa-Arg and -Lys/Arg-Xaa-Xaa-Arg C-degrons, such as SIL1 or OR51B2, leading to their ubiquitination and degradation. The CRL2(FEM1C) complex mediates ubiquitination and degradation of truncated MSRB1/SEPX1 selenoproteins produced by failed UGA/Sec decoding. Promotes ubiquitination and degradation of SLBP. This Homo sapiens (Human) protein is Protein fem-1 homolog C.